Here is a 74-residue protein sequence, read N- to C-terminus: Translation initiation factor IF-1 (74 aa).

An S1-like domain is found at Met1–Lys72.

This sequence belongs to the IF-1 family. As to quaternary structure, component of the 30S ribosomal translation pre-initiation complex which assembles on the 30S ribosome in the order IF-2 and IF-3, IF-1 and N-formylmethionyl-tRNA(fMet); mRNA recruitment can occur at any time during PIC assembly.

It is found in the cytoplasm. In terms of biological role, one of the essential components for the initiation of protein synthesis. Stabilizes the binding of IF-2 and IF-3 on the 30S subunit to which N-formylmethionyl-tRNA(fMet) subsequently binds. Helps modulate mRNA selection, yielding the 30S pre-initiation complex (PIC). Upon addition of the 50S ribosomal subunit IF-1, IF-2 and IF-3 are released leaving the mature 70S translation initiation complex. This Synechococcus sp. (strain JA-3-3Ab) (Cyanobacteria bacterium Yellowstone A-Prime) protein is Translation initiation factor IF-1.